The chain runs to 183 residues: uncharacterized protein (183 aa).

This is an uncharacterized protein from Acanthamoeba polyphaga mimivirus (APMV).